Consider the following 505-residue polypeptide: Glutamate--tRNA ligase (505 aa).

Positions 12 to 22 match the 'HIGH' region motif; that stretch reads PSPTGALHIGG. The 'KMSKS' region motif lies at 260 to 264; the sequence is KLSKR. Position 263 (Lys263) interacts with ATP.

Belongs to the class-I aminoacyl-tRNA synthetase family. Glutamate--tRNA ligase type 1 subfamily. Monomer.

The protein resides in the cytoplasm. The catalysed reaction is tRNA(Glu) + L-glutamate + ATP = L-glutamyl-tRNA(Glu) + AMP + diphosphate. In terms of biological role, catalyzes the attachment of glutamate to tRNA(Glu) in a two-step reaction: glutamate is first activated by ATP to form Glu-AMP and then transferred to the acceptor end of tRNA(Glu). In Bacteroides fragilis (strain ATCC 25285 / DSM 2151 / CCUG 4856 / JCM 11019 / LMG 10263 / NCTC 9343 / Onslow / VPI 2553 / EN-2), this protein is Glutamate--tRNA ligase.